A 1620-amino-acid polypeptide reads, in one-letter code: MSTIGNNASSIGNTPILGSVPSNIAAAPPTTTTTTTTTTTTTTTTPTTTTPTTTTTTTNTLNTMIASTTPLSTTPTNVPIKPPLLINQFGKPLPNLSSTASSPRTPIKPFIGTPNNPSTPSSLIALSSPIGGGGVGSTPFSNQFIGYSGGGGGSSSSSNNSTIAYNGSTPYKPVLTGSGGIGGGGSGSSTPNRGRFSGKTSNIGGGGGLNNLNVGGGVGVIVGGIGNGSSNSGVGGTTTYQASQLVVTNISKGTTTKRSFPIPTNITPPKCPLPNWFTSLDNIHQVEINNLPEFFQDDNENGNGNGNGSGSGSNNMTEIDYDEIDEDEYSYVDSVEYKYIKKKQKLQLSNKELYKIYRDYMITSYQKNPYQYLSVTDVKNHFINQNKKTFKVNIRSIIKIFDFLEYWDLINCFVNSGDYMNIISPGVFNYCNEFYQSFYRKKFKHEEREKEEKERLEREEKERLEREEKQEKEEKERLEKEEKERLEREEKQEKEEKEEKEEKEENEEKEEKEEKEKEEKEEKEKQEKEDDKEKQENENEQEKIEKKENKNDSQNKEIKENHDKKDETTDSNNTTTTTTTTTTTSTNTLVAESSSSSSTETDDNDKEMKEQPVQENKDKEMMETDTTKENNGVETTETTNQTTDSIETDKEMKDQPIINLEKEKSSEDKEINDDHNENEKQDKDKENEKEKEDKTENGNEKENEKENEKENEKENEKENENEKENENEKENENKKEKEKENKKENENENEKVDEKIEIDKEGINEDEKMDEEKEEKINNKKEDEEVESEIKKDKLKENEEVEGEIEGENDEGEVVEEDEDEEMEIEEDEEDEEDEKSKEPKKLTTTKSANDQLIKKKKPLFECKKCKADCSNVRYQLVNNSTALDGNILPEYFYPMIICVNCFSSGNYENFIQSSSFQRIEQHQPEEFGWTDIETLLLLEGIEIFRDNWQEISDYIGGSKTPEQCLTHFIRLPIEDEFLERKISSFPVGSLSKKEIDSNNPFSITYGVNNPIMSLVAFFSSYSQPPLGLLASKAAKVILEILNDPKYQQPSKEELERIQKEKDDKEKEDKEKELKEKESKEKELKEKDDKEKEKEKELKEREDKEKEEDKEAKDKVDKEKEEDKQKQDKEKEEDKEKQEKDKEEDKDKEKEENKEDKEKEGTDKEGKDKEDKEIKEDKEKEEKDKEAIGDHDKSDSTNTTTTKEMEIEKQDSSTSTNKETVEMNQDDHVKIDEKETKENDKKSITEEENQQKDDNDNNNNSHNHNKEIEKDDNKENENEKEKENENKNEKQIENENEKEKDLNNLSESQSSNDQSKSNEQMSSDNQESKENSESNSNTQITSKEQNITTDQSEKPKETPTTTTPATLPATPISESNTTTTNTIVDKENNNETNKTNENNSNNNNTNEENKTAESNNMETVVENNEKKPVDNDDNNNNNNNSNDKMDVDNKNNNNNNNVDKNEKDKDEENEMEEVEEEENDLNDEKKENGVDGVGEEDDDEDVEMETASVDIRKSTTTTTKTSLLMMSPPPPKKSRIPEPNPEYFSEAAIQAATAAAFETIQNESKKYYELEEQEIRDLIRSIVICQIRKLELLWKFYVTYEQSLEKEKDYYEKITKSHLQ.

A compositionally biased stretch (polar residues) spans 1 to 13 (MSTIGNNASSIGN). Disordered regions lie at residues 1 to 57 (MSTI…TTTT), 176 to 204 (TGSGGIGGGGSGSSTPNRGRFSGKTSNIG), 294 to 318 (FFQDDNENGNGNGNGSGSGSNNMTE), and 450 to 849 (KEEK…TKSA). Positions 28 to 57 (PPTTTTTTTTTTTTTTTTPTTTTPTTTTTT) are enriched in low complexity. Residues 177–187 (GSGGIGGGGSG) are compositionally biased toward gly residues. The region spanning 310–421 (GSGSNNMTEI…CFVNSGDYMN (112 aa)) is the SWIRM domain. Residues 450-497 (KEEKERLEREEKERLEREEKQEKEEKERLEKEEKERLEREEKQEKEEK) show a composition bias toward basic and acidic residues. A compositionally biased stretch (acidic residues) spans 498 to 511 (EEKEEKEENEEKEE). Positions 512-568 (KEEKEKEEKEEKEKQEKEDDKEKQENENEQEKIEKKENKNDSQNKEIKENHDKKDET) are enriched in basic and acidic residues. Low complexity predominate over residues 570–598 (DSNNTTTTTTTTTTTSTNTLVAESSSSSS). The segment covering 606-628 (KEMKEQPVQENKDKEMMETDTTK) has biased composition (basic and acidic residues). Residues 629 to 645 (ENNGVETTETTNQTTDS) show a composition bias toward low complexity. Residues 647–798 (ETDKEMKDQP…EIKKDKLKEN (152 aa)) show a composition bias toward basic and acidic residues. Over residues 799-834 (EEVEGEIEGENDEGEVVEEDEDEEMEIEEDEEDEED) the composition is skewed to acidic residues. The region spanning 925 to 977 (PEEFGWTDIETLLLLEGIEIFRDNWQEISDYIGGSKTPEQCLTHFIRLPIEDE) is the SANT domain. The disordered stretch occupies residues 1049-1506 (QPSKEELERI…DDDEDVEMET (458 aa)). 3 stretches are compositionally biased toward basic and acidic residues: residues 1051–1195 (SKEE…DKSD), 1219–1255 (ETVEMNQDDHVKIDEKETKENDKKSITEEENQQKDDN), and 1264–1302 (HNKEIEKDDNKENENEKEKENENKNEKQIENENEKEKDL). The span at 1303 to 1325 (NNLSESQSSNDQSKSNEQMSSDN) shows a compositional bias: low complexity. Over residues 1338-1350 (TQITSKEQNITTD) the composition is skewed to polar residues. Low complexity-rich tracts occupy residues 1358–1382 (TPTTTTPATLPATPISESNTTTTNT) and 1390–1416 (NETNKTNENNSNNNNTNEENKTAESNN). Composition is skewed to acidic residues over residues 1467-1481 (EENEMEEVEEEENDL) and 1493-1504 (VGEEDDDEDVEM).

It localises to the nucleus. This chain is Myb-like protein X (mybX), found in Dictyostelium discoideum (Social amoeba).